The following is a 539-amino-acid chain: Chaperonin GroEL (539 aa).

Residues 29-32 (TLGP), 86-90 (DGTTT), Gly413, and Asp494 each bind ATP.

It belongs to the chaperonin (HSP60) family. Forms a cylinder of 14 subunits composed of two heptameric rings stacked back-to-back. Interacts with the co-chaperonin GroES.

It localises to the cytoplasm. It carries out the reaction ATP + H2O + a folded polypeptide = ADP + phosphate + an unfolded polypeptide.. Together with its co-chaperonin GroES, plays an essential role in assisting protein folding. The GroEL-GroES system forms a nano-cage that allows encapsulation of the non-native substrate proteins and provides a physical environment optimized to promote and accelerate protein folding. In Finegoldia magna (strain ATCC 29328 / DSM 20472 / WAL 2508) (Peptostreptococcus magnus), this protein is Chaperonin GroEL.